The primary structure comprises 69 residues: Fungal defensin oryzeasin (69 aa).

The N-terminal stretch at 1–18 is a signal peptide; that stretch reads MKLLTVAFSLLLLGQVHA. Residues 19–26 constitute a propeptide that is removed on maturation; that stretch reads SPLVLDKR. 3 disulfides stabilise this stretch: cysteine 29/cysteine 60, cysteine 44/cysteine 66, and cysteine 48/cysteine 68.

The protein belongs to the invertebrate defensin family.

It localises to the secreted. Its subcellular location is the target cell membrane. Shows antibacterial activity against numerous Gram-positive bacteria. It selectively inhibits peptidoglycan biosynthesis through complex formation with the cell wall precursor lipid II (1:1 molar ratio) thus inhibiting cell wall synthesis. The protein is Fungal defensin oryzeasin of Aspergillus oryzae (strain ATCC 42149 / RIB 40) (Yellow koji mold).